Reading from the N-terminus, the 533-residue chain is Beta-1,2-xylosyltransferase RCN11 (533 aa).

Topologically, residues 1-23 (MMPVRTYHHHHHHNNSNNHRLRR) are cytoplasmic. Residues 24–44 (IIPRVLLAVFAIYAVSFAAYL) form a helical; Signal-anchor for type II membrane protein membrane-spanning segment. Topologically, residues 45–533 (LRHQSPHPHP…LSNILKGFGC (489 aa)) are lumenal. The segment at 51–78 (HPHPHPAADPERDAVDAAGGGGGGGAVD) is disordered. Positions 56–65 (PAADPERDAV) are enriched in basic and acidic residues. N-linked (GlcNAc...) asparagine glycans are attached at residues Asn-307 and Asn-313.

Belongs to the glycosyltransferase 61 family. Expressed at the base of the crown roots and in the basal region of the shoot, which contains the shoot and axillary meristems.

The protein resides in the golgi apparatus membrane. It participates in glycan metabolism. Glycosyltransferase involved in the xylosylation of N-glycans. Possesses beta-1,2-xylosyltransferase activity, transferring xylose from UDP-xylose to the core beta-linked mannose of N-glycans. Beta-1,2-linked xylose residues on N-glycans are critical for seed germination and plant development and growth under conditions of abiotic stress. The chain is Beta-1,2-xylosyltransferase RCN11 from Oryza sativa subsp. japonica (Rice).